The sequence spans 379 residues: Synaptic vesicle membrane protein VAT-1 (379 aa).

Ser-273 carries the post-translational modification Phosphoserine.

This sequence belongs to the zinc-containing alcohol dehydrogenase family. Quinone oxidoreductase subfamily. As to expression, cholinergic synaptic vesicles.

It is found in the cytoplasmic vesicle. Its subcellular location is the secretory vesicle. It localises to the synaptic vesicle membrane. Functionally, may play a central role in the functions mediated by specific classes of synaptic vesicles. This chain is Synaptic vesicle membrane protein VAT-1, found in Tetronarce californica (Pacific electric ray).